The following is a 102-amino-acid chain: Large ribosomal subunit protein uL24 (102 aa).

It belongs to the universal ribosomal protein uL24 family. In terms of assembly, part of the 50S ribosomal subunit.

Its function is as follows. One of two assembly initiator proteins, it binds directly to the 5'-end of the 23S rRNA, where it nucleates assembly of the 50S subunit. Functionally, one of the proteins that surrounds the polypeptide exit tunnel on the outside of the subunit. In Cupriavidus pinatubonensis (strain JMP 134 / LMG 1197) (Cupriavidus necator (strain JMP 134)), this protein is Large ribosomal subunit protein uL24.